The following is a 262-amino-acid chain: Glucosamine-6-phosphate deaminase (262 aa).

The Proton acceptor; for enolization step role is filled by Asp-63. Residue Asn-129 is the For ring-opening step of the active site. His-131 (proton acceptor; for ring-opening step) is an active-site residue. Glu-136 (for ring-opening step) is an active-site residue.

The protein belongs to the glucosamine/galactosamine-6-phosphate isomerase family. NagB subfamily.

The enzyme catalyses alpha-D-glucosamine 6-phosphate + H2O = beta-D-fructose 6-phosphate + NH4(+). It functions in the pathway amino-sugar metabolism; N-acetylneuraminate degradation; D-fructose 6-phosphate from N-acetylneuraminate: step 5/5. In terms of biological role, catalyzes the reversible isomerization-deamination of glucosamine 6-phosphate (GlcN6P) to form fructose 6-phosphate (Fru6P) and ammonium ion. This chain is Glucosamine-6-phosphate deaminase, found in Bacillus cereus (strain ZK / E33L).